We begin with the raw amino-acid sequence, 176 residues long: MTKPNADSLMKIGQLKKPYGIKGWLWVFSETEEREAIFSYSPWWMKTATGFKPLTVTQWRRQGTGIVAQFEQVPDRNVAETMNGVSIWIDKDSLPSTEEDEYYWSDLVGLSVINKQDECLGTVKELFETGAHPIMKVVPSQDSIDDEPRMIPWHKQTVDVVDLAAGRMVVDWERDF.

Residues 99–176 (EDEYYWSDLV…RMVVDWERDF (78 aa)) enclose the PRC barrel domain.

This sequence belongs to the RimM family. In terms of assembly, binds ribosomal protein uS19.

The protein localises to the cytoplasm. Its function is as follows. An accessory protein needed during the final step in the assembly of 30S ribosomal subunit, possibly for assembly of the head region. Essential for efficient processing of 16S rRNA. May be needed both before and after RbfA during the maturation of 16S rRNA. It has affinity for free ribosomal 30S subunits but not for 70S ribosomes. The polypeptide is Ribosome maturation factor RimM (Psychrobacter sp. (strain PRwf-1)).